We begin with the raw amino-acid sequence, 424 residues long: Exodeoxyribonuclease 7 large subunit (424 aa).

Belongs to the XseA family. Heterooligomer composed of large and small subunits.

It is found in the cytoplasm. It catalyses the reaction Exonucleolytic cleavage in either 5'- to 3'- or 3'- to 5'-direction to yield nucleoside 5'-phosphates.. In terms of biological role, bidirectionally degrades single-stranded DNA into large acid-insoluble oligonucleotides, which are then degraded further into small acid-soluble oligonucleotides. The sequence is that of Exodeoxyribonuclease 7 large subunit from Cyanothece sp. (strain PCC 7425 / ATCC 29141).